The primary structure comprises 440 residues: GTPase Der (440 aa).

EngA-type G domains are found at residues 4 to 168 (PVVA…PPEK) and 177 to 352 (IKIA…GRHS). GTP contacts are provided by residues 10–17 (GRPNVGKS), 57–61 (DTGGL), 120–123 (NKVE), 183–190 (GRPNVGKS), 230–234 (DTAGM), and 295–298 (NKWD). The region spanning 353–437 (MRISTPGLNA…PIRFVLRKKT (85 aa)) is the KH-like domain.

It belongs to the TRAFAC class TrmE-Era-EngA-EngB-Septin-like GTPase superfamily. EngA (Der) GTPase family. In terms of assembly, associates with the 50S ribosomal subunit.

In terms of biological role, GTPase that plays an essential role in the late steps of ribosome biogenesis. In Pelotomaculum thermopropionicum (strain DSM 13744 / JCM 10971 / SI), this protein is GTPase Der.